Reading from the N-terminus, the 361-residue chain is Epi-isozizaene synthase (361 aa).

Mg(2+) contacts are provided by Asp-99, Asp-103, Asn-240, Ser-244, and Glu-248. The short motif at 99 to 103 (DDRHD) is the DDXXD motif element.

Belongs to the terpene synthase family. Mg(2+) is required as a cofactor. It depends on Mn(2+) as a cofactor. Fe(3+) serves as cofactor.

The enzyme catalyses (2E,6E)-farnesyl diphosphate = (+)-epi-isozizaene + diphosphate. It functions in the pathway sesquiterpene biosynthesis; epi-isozizaene biosynthesis. Functionally, catalyzes the cyclization of farnesyl diphosphate (FPP) to the sesquiterpene epi-isozizaene. This chain is Epi-isozizaene synthase (cyc1), found in Streptomyces coelicolor (strain ATCC BAA-471 / A3(2) / M145).